The primary structure comprises 221 residues: Flavin-dependent thymidylate synthase (221 aa).

The ThyX domain occupies 9-209 (GFVKLLDHMG…PWTYESFIRY (201 aa)). FAD-binding positions include serine 55, 78-80 (RHR), and glutamate 86. DUMP-binding positions include 75-78 (QWMR), 86-90 (ELSGR), and arginine 148. The ThyX motif motif lies at 78–88 (RHRIASYNELS). Residues 164–166 (NAR) and asparagine 170 each bind FAD. Arginine 175 serves as a coordination point for dUMP. Arginine 175 (involved in ionization of N3 of dUMP, leading to its activation) is an active-site residue.

Belongs to the thymidylate synthase ThyX family. In terms of assembly, homotetramer. FAD serves as cofactor.

The enzyme catalyses dUMP + (6R)-5,10-methylene-5,6,7,8-tetrahydrofolate + NADPH + H(+) = dTMP + (6S)-5,6,7,8-tetrahydrofolate + NADP(+). It participates in pyrimidine metabolism; dTTP biosynthesis. Catalyzes the reductive methylation of 2'-deoxyuridine-5'-monophosphate (dUMP) to 2'-deoxythymidine-5'-monophosphate (dTMP) while utilizing 5,10-methylenetetrahydrofolate (mTHF) as the methyl donor, and NADPH and FADH(2) as the reductant. In Pseudothermotoga lettingae (strain ATCC BAA-301 / DSM 14385 / NBRC 107922 / TMO) (Thermotoga lettingae), this protein is Flavin-dependent thymidylate synthase.